We begin with the raw amino-acid sequence, 330 residues long: CRISPR-associated endonuclease Cas1 2 (330 aa).

Residues Glu-156, His-222, and Glu-237 each contribute to the Mn(2+) site.

The protein belongs to the CRISPR-associated endonuclease Cas1 family. Homodimer, forms a heterotetramer with a Cas2 homodimer. Mg(2+) is required as a cofactor. Mn(2+) serves as cofactor.

Functionally, CRISPR (clustered regularly interspaced short palindromic repeat), is an adaptive immune system that provides protection against mobile genetic elements (viruses, transposable elements and conjugative plasmids). CRISPR clusters contain spacers, sequences complementary to antecedent mobile elements, and target invading nucleic acids. CRISPR clusters are transcribed and processed into CRISPR RNA (crRNA). Acts as a dsDNA endonuclease. Involved in the integration of spacer DNA into the CRISPR cassette. The chain is CRISPR-associated endonuclease Cas1 2 from Thermodesulfovibrio yellowstonii (strain ATCC 51303 / DSM 11347 / YP87).